We begin with the raw amino-acid sequence, 274 residues long: tRNA pseudouridine synthase A (274 aa).

Residue D51 is the Nucleophile of the active site. Position 109 (Y109) interacts with substrate.

Belongs to the tRNA pseudouridine synthase TruA family. In terms of assembly, homodimer.

The catalysed reaction is uridine(38/39/40) in tRNA = pseudouridine(38/39/40) in tRNA. Functionally, formation of pseudouridine at positions 38, 39 and 40 in the anticodon stem and loop of transfer RNAs. In Acidovorax ebreus (strain TPSY) (Diaphorobacter sp. (strain TPSY)), this protein is tRNA pseudouridine synthase A.